The primary structure comprises 450 residues: 3-phosphoshikimate 1-carboxyvinyltransferase (450 aa).

Positions 23, 24, and 28 each coordinate 3-phosphoshikimate. Lys-23 serves as a coordination point for phosphoenolpyruvate. The phosphoenolpyruvate site is built by Gly-96 and Arg-124. Residues Ser-167, Ser-168, Gln-169, Ser-196, Glu-311, and His-340 each coordinate 3-phosphoshikimate. Gln-169 provides a ligand contact to phosphoenolpyruvate. Residue Glu-311 is the Proton acceptor of the active site. Residues Arg-344, Arg-385, and Lys-410 each coordinate phosphoenolpyruvate. Positions 426 to 450 (GQGWGYPQPRSGQRARRATGQGSGG) are disordered.

This sequence belongs to the EPSP synthase family. In terms of assembly, monomer.

It localises to the cytoplasm. The enzyme catalyses 3-phosphoshikimate + phosphoenolpyruvate = 5-O-(1-carboxyvinyl)-3-phosphoshikimate + phosphate. The protein operates within metabolic intermediate biosynthesis; chorismate biosynthesis; chorismate from D-erythrose 4-phosphate and phosphoenolpyruvate: step 6/7. Its function is as follows. Catalyzes the transfer of the enolpyruvyl moiety of phosphoenolpyruvate (PEP) to the 5-hydroxyl of shikimate-3-phosphate (S3P) to produce enolpyruvyl shikimate-3-phosphate and inorganic phosphate. The polypeptide is 3-phosphoshikimate 1-carboxyvinyltransferase (Mycobacterium bovis (strain ATCC BAA-935 / AF2122/97)).